The primary structure comprises 235 residues: Aspartate/glutamate leucyltransferase (235 aa).

This sequence belongs to the R-transferase family. Bpt subfamily.

The protein localises to the cytoplasm. It catalyses the reaction N-terminal L-glutamyl-[protein] + L-leucyl-tRNA(Leu) = N-terminal L-leucyl-L-glutamyl-[protein] + tRNA(Leu) + H(+). It carries out the reaction N-terminal L-aspartyl-[protein] + L-leucyl-tRNA(Leu) = N-terminal L-leucyl-L-aspartyl-[protein] + tRNA(Leu) + H(+). Functions in the N-end rule pathway of protein degradation where it conjugates Leu from its aminoacyl-tRNA to the N-termini of proteins containing an N-terminal aspartate or glutamate. This is Aspartate/glutamate leucyltransferase from Pseudomonas putida (strain ATCC 700007 / DSM 6899 / JCM 31910 / BCRC 17059 / LMG 24140 / F1).